Reading from the N-terminus, the 271-residue chain is Troponin T, fast skeletal muscle (271 aa).

Acidic residues predominate over residues 1 to 21; it reads MSDEEVEHVEEEYEEEEEAQE. The segment at 1-74 is disordered; the sequence is MSDEEVEHVE…EKVDFDDIQK (74 aa). Ser-2 is subject to N-acetylserine. Phosphoserine is present on Ser-2. 2 stretches are compositionally biased toward basic and acidic residues: residues 29 to 53 and 62 to 74; these read EVHEVHEEVHEVHEPEEVQEEEKPR and PEGEKVDFDDIQK. At Ser-90 the chain carries Phosphoserine. Basic and acidic residues predominate over residues 113-155; that stretch reads RAERAEQQRIRAEKERERQNRLAEEKARREEEEAKRRAEDDLK. Positions 113 to 192 are disordered; it reads RAERAEQQRI…TAREMKKKVL (80 aa). Residues Ser-161, Ser-168, and Ser-169 each carry the phosphoserine modification. The span at 183–192 shows a compositional bias: basic and acidic residues; sequence TAREMKKKVL. Ser-205 is subject to Phosphoserine. A Phosphotyrosine modification is found at Tyr-221. Residues 249-271 form a disordered region; it reads DQAQKHSKKAGTTPKGKVGGRWK.

This sequence belongs to the troponin T family.

Troponin T is the tropomyosin-binding subunit of troponin, the thin filament regulatory complex which confers calcium-sensitivity to striated muscle actomyosin ATPase activity. In Sus scrofa (Pig), this protein is Troponin T, fast skeletal muscle (TNNT3).